The primary structure comprises 232 residues: Octanoyltransferase (232 aa).

A BPL/LPL catalytic domain is found at 44–219 (EHTGDELWVV…QLARQFGLVL (176 aa)). Substrate is bound by residues 83-90 (RGGQVTYH), 150-152 (ALG), and 163-165 (GLS). Cysteine 181 serves as the catalytic Acyl-thioester intermediate.

This sequence belongs to the LipB family.

The protein resides in the cytoplasm. The catalysed reaction is octanoyl-[ACP] + L-lysyl-[protein] = N(6)-octanoyl-L-lysyl-[protein] + holo-[ACP] + H(+). The protein operates within protein modification; protein lipoylation via endogenous pathway; protein N(6)-(lipoyl)lysine from octanoyl-[acyl-carrier-protein]: step 1/2. Functionally, catalyzes the transfer of endogenously produced octanoic acid from octanoyl-acyl-carrier-protein onto the lipoyl domains of lipoate-dependent enzymes. Lipoyl-ACP can also act as a substrate although octanoyl-ACP is likely to be the physiological substrate. This chain is Octanoyltransferase, found in Xanthomonas campestris pv. campestris (strain 8004).